Here is a 179-residue protein sequence, read N- to C-terminus: uncharacterized protein (179 aa).

Residues 1–27 (MKTISKQLSAVIFPFIFSACVSQSASS) constitute a signal peptide (or 24).

This is an uncharacterized protein from Haemophilus influenzae (strain ATCC 51907 / DSM 11121 / KW20 / Rd).